The sequence spans 498 residues: Cytochrome P450 monooxygenase idtP (498 aa).

Residues 1-20 (MFLLHILAIGACLLWYFVRS) form the signal peptide. Cysteine 439 is a binding site for heme.

Belongs to the cytochrome P450 family. The cofactor is heme.

The protein operates within secondary metabolite biosynthesis. In terms of biological role, cytochrome P450 monooxygenase; part of the gene cluster that mediates the biosynthesis of paspalitrems, indole-diterpene (IDT) mycotoxins that are potent tremorgens in mammals. The geranylgeranyl diphosphate (GGPP) synthase idtG is proposed to catalyze the first step in IDT biosynthesis via catalysis of a series of iterative condensations of isopentenyl diphosphate (IPP) with dimethylallyl diphosphate (DMAPP), geranyl diphosphate (GPP), and farnesyl diphosphate (FPP), to form GGPP. Condensation of indole-3-glycerol phosphate with GGPP by the prenyltransferase idtC then forms 3-geranylgeranylindole (3-GGI). Epoxidation of the two terminal alkenes of the geranylgeranyl moiety by the FAD-dependent monooxygenase idtM, and cyclization by the terpene cyclase idtB then leads to the production of paspaline. The cytochrome P450 monooxygenase idtP then catalyzes oxidative elimination of the pendant methyl group at C-12 of paspaline and generates the C-10 ketone to yield 13-desoxypaxilline. The cytochrome P450 monooxygenase idtQ may catalyze the C-13 oxidation of 13-desoxypaxilline to afford paxilline. Considering that both paspalicine and paxilline were detected in C.paspali, idtQ also catalyzes the formation of paspalinine from 13-desoxypaxilline via paspalicine as an intermediate. Finally, the alpha-prenyltransferase idtF prenylates paspalinine at the C-20 or the C-21 positions to yield paspalitrems A and C, respectively. The hydroxylation of paspalitrem A at C-32 by a still unknown oxidase affords paspalitrem B. The polypeptide is Cytochrome P450 monooxygenase idtP (Claviceps paspali (Rye ergot fungus)).